Consider the following 88-residue polypeptide: Small ribosomal subunit protein uS15 (88 aa).

It belongs to the universal ribosomal protein uS15 family. As to quaternary structure, part of the 30S ribosomal subunit. Forms a bridge to the 50S subunit in the 70S ribosome, contacting the 23S rRNA.

In terms of biological role, one of the primary rRNA binding proteins, it binds directly to 16S rRNA where it helps nucleate assembly of the platform of the 30S subunit by binding and bridging several RNA helices of the 16S rRNA. Functionally, forms an intersubunit bridge (bridge B4) with the 23S rRNA of the 50S subunit in the ribosome. The polypeptide is Small ribosomal subunit protein uS15 (Borreliella afzelii (strain PKo) (Borrelia afzelii)).